Consider the following 484-residue polypeptide: uncharacterized protein (484 aa).

The helical transmembrane segment at 25–45 (PLSLFVVLAAVPLPIYFSGLL) threads the bilayer. The EF-hand domain maps to 384 to 419 (LSFEETKELWVRADLDGNGVFDYEELKKIWNMTMVN). The Ca(2+) site is built by D397, D399, N401, and E408.

It is found in the membrane. This is an uncharacterized protein from Arabidopsis thaliana (Mouse-ear cress).